We begin with the raw amino-acid sequence, 538 residues long: Protein NRT1/ PTR FAMILY 5.11 (538 aa).

2 helical membrane passes run 44 to 64 (FAYF…LGES) and 74 to 94 (AWTG…DSYL). A Phosphothreonine modification is found at T99. 10 helical membrane passes run 100-120 (IIIS…STMI), 134-154 (TIFF…NPCI), 175-194 (SFFN…TRLV), 204-224 (WSLG…LFLL), 308-328 (IPIW…PTFF), 342-362 (GLLV…VVFI), 389-409 (IGTG…VETK), 424-444 (VWWL…TMVG), 463-483 (ALNL…ISVI), and 507-527 (YFYW…LWFA).

It belongs to the major facilitator superfamily. Proton-dependent oligopeptide transporter (POT/PTR) (TC 2.A.17) family. Expressed in shoots and roots.

The protein resides in the membrane. The polypeptide is Protein NRT1/ PTR FAMILY 5.11 (NPF5.11) (Arabidopsis thaliana (Mouse-ear cress)).